The chain runs to 426 residues: Adenylosuccinate synthetase 2 (426 aa).

GTP contacts are provided by residues 12–18 (GDEGKGK) and 40–42 (GHT). Asp-13 acts as the Proton acceptor in catalysis. Mg(2+)-binding residues include Asp-13 and Gly-40. Residues 13–16 (DEGK), 38–41 (NAGH), Arg-147, Asn-223, Thr-238, and Arg-302 contribute to the IMP site. His-41 (proton donor) is an active-site residue. 298 to 304 (TNTGRRR) provides a ligand contact to substrate. GTP-binding positions include Arg-304, 330-332 (KLD), and 412-414 (GVG).

This sequence belongs to the adenylosuccinate synthetase family. As to quaternary structure, homodimer. It depends on Mg(2+) as a cofactor.

The protein localises to the cytoplasm. The enzyme catalyses IMP + L-aspartate + GTP = N(6)-(1,2-dicarboxyethyl)-AMP + GDP + phosphate + 2 H(+). The protein operates within purine metabolism; AMP biosynthesis via de novo pathway; AMP from IMP: step 1/2. In terms of biological role, plays an important role in the de novo pathway and in the salvage pathway of purine nucleotide biosynthesis. Catalyzes the first committed step in the biosynthesis of AMP from IMP. The sequence is that of Adenylosuccinate synthetase 2 from Laccaria bicolor (strain S238N-H82 / ATCC MYA-4686) (Bicoloured deceiver).